We begin with the raw amino-acid sequence, 114 residues long: Class I hydrophobin 6 (114 aa).

An N-terminal signal peptide occupies residues 1–19 (MLFKQLILVATALTTLAVA). Disulfide bonds link C33–C93, C40–C87, C41–C74, and C94–C107. The N-linked (GlcNAc...) asparagine glycan is linked to N42.

It belongs to the fungal hydrophobin family. As to quaternary structure, self-assembles to form functional amyloid fibrils called rodlets. Self-assembly into fibrillar rodlets occurs spontaneously at hydrophobic:hydrophilic interfaces and the rodlets further associate laterally to form amphipathic monolayers.

It localises to the secreted. The protein localises to the cell wall. In terms of biological role, aerial growth, conidiation, and dispersal of filamentous fungi in the environment rely upon a capability of their secreting small amphipathic proteins called hydrophobins (HPBs) with low sequence identity. Class I can self-assemble into an outermost layer of rodlet bundles on aerial cell surfaces, conferring cellular hydrophobicity that supports fungal growth, development and dispersal; whereas Class II form highly ordered films at water-air interfaces through intermolecular interactions but contribute nothing to the rodlet structure. This Pleurotus ostreatus (strain PC15) (Oyster mushroom) protein is Class I hydrophobin 6.